Reading from the N-terminus, the 124-residue chain is Large ribosomal subunit protein bL21 (124 aa).

Belongs to the bacterial ribosomal protein bL21 family. In terms of assembly, part of the 50S ribosomal subunit. Contacts protein L20.

Its function is as follows. This protein binds to 23S rRNA in the presence of protein L20. This is Large ribosomal subunit protein bL21 from Synechocystis sp. (strain ATCC 27184 / PCC 6803 / Kazusa).